The following is a 237-amino-acid chain: Ribosomal RNA small subunit methyltransferase G (237 aa).

S-adenosyl-L-methionine is bound by residues G75, F80, 127–128 (AE), and R146.

It belongs to the methyltransferase superfamily. RNA methyltransferase RsmG family.

It localises to the cytoplasm. Specifically methylates the N7 position of a guanine in 16S rRNA. This is Ribosomal RNA small subunit methyltransferase G from Synechococcus sp. (strain RCC307).